The chain runs to 348 residues: Ion-translocating oxidoreductase complex subunit D (348 aa).

4 consecutive transmembrane segments (helical) span residues 23-43 (WVLACALPGLIAQTYFFGYGT), 44-64 (LIQLLLAISVAVALEAGIMLL), 72-91 (ALRDYSAVVTAWLLAVAIPP), and 126-146 (IAYVVLLISFPVQMTSWMAPI). At T187 the chain carries FMN phosphoryl threonine. 5 helical membrane passes run 214-234 (FAGIGWEWVNIAYLLGGLILL), 243-263 (IPMAMLAGLVFTALLAQLFAP), 266-286 (TASPMIHLLSGATMLGAFFIA), 300-320 (LIYGFFIGAMVFLIRSWGGFP), and 321-341 (DGVAFAVLLANMCVPLIDYYT).

It belongs to the NqrB/RnfD family. In terms of assembly, the complex is composed of six subunits: RnfA, RnfB, RnfC, RnfD, RnfE and RnfG. FMN serves as cofactor.

Its subcellular location is the cell inner membrane. Functionally, part of a membrane-bound complex that couples electron transfer with translocation of ions across the membrane. The polypeptide is Ion-translocating oxidoreductase complex subunit D (Vibrio cholerae serotype O1 (strain ATCC 39315 / El Tor Inaba N16961)).